Consider the following 284-residue polypeptide: Circadian clock oscillator protein KaiA (284 aa).

Residues 1–135 (MLSQIAICIW…LRLAPVETMA (135 aa)) are psR domain, binds oxidized quinones. Positions 1-164 (MLSQIAICIW…DLAQRLQERL (164 aa)) constitute a KaiA N-terminal domain. The flexible linker stretch occupies residues 165–173 (GYLGVYYKR). The KaiA C-terminal domain maps to 174–282 (DPDRFLRNLP…CEMYRRSIPR (109 aa)).

It belongs to the KaiA family. As to quaternary structure, homodimer. The KaiABC complex composition changes during the circadian cycle to control KaiC phosphorylation. Complexes KaiC(6), KaiA(2-4):KaiC(6), KaiB(6):KaiC(6) and KaiC(6):KaiB(6):KaiA(12) are among the most important forms, many form cooperatively. The KaiA:KaiB complex is only found at 20-24 hours in the circadian cycle (subjective night). Binds to the C-terminal A-loop of KaiC via a coiled-coil structure. KaiA and CikA compete for binding to KaiB(fs). CikA copurifies with this protein in the clock complex. Interacts with LdpA.

With respect to regulation, binding of oxidized quinones (produced as darkness falls) prevents KaiA from stimulating KaiC autophosphorylation. In terms of biological role, key component of the KaiABC oscillator complex, which constitutes the main circadian regulator in cyanobacteria. Complex composition changes during the circadian cycle to control KaiC phosphorylation. KaiA stimulates KaiC autophosphorylation, while KaiB sequesters KaiA, leading to KaiC autodephosphorylation. KaiA binding to the KaiC CII domain during the subjective day yields KaiA(2-4):KaiC(6) complexes which stimulate KaiC autophosphorylation. A KaiA dimer is sufficient to enhance KaiC hexamer phosphorylation. Phospho-Ser-431 KaiC accumulation triggers binding of KaiB during the subjective night to form the KaiB(6):KaiC(6) complex, leading to changes in the output regulators CikA and SasA. KaiB(6):KaiC(6) formation exposes a site for KaiA binding on KaiB that sequesters KaiA from KaiC's CII domain, making the KaiC(6):KaiB(6):KaiA(12) complex resulting in KaiC autodephosphorylation. Complete dephosphorylation of KaiC leads to dissociation of KaiA(2):KaiB(1), completing 1 cycle of the Kai oscillator. Functionally, circadian oscillations can be generated in vitro by incubating KaiA, KaiB and KaiC with 1 mM ATP. The cycle is self-sustainable for at least 3 cycles and resistant to temperature changes. A very robust clock is reconstituted with KaiA, KaiB, KaiC, SasA, CikA and RpaA; output is measured by transcription from an appropriate reporter. KaiA binds oxidized quinones via its N-terminal PsR domain and is able to sense redox signals directly; quinone analog DBMIB (2,5-dibromo-3-methyl-6-isopropyl-p-benzoquinone) blocks KaiA stimulation of KaiC phosphorylation. The homodimer binds up to 8 quinones in the crystal structure, 3 in the PsR domain and 1 via the C-terminal helical bundle. Binding of oxidized quinone to the KaiA C-terminal domain reduces the phosphorylation of KaiC slightly; quinones may interact in a complex manner with KaiA to mediate clock input. This is Circadian clock oscillator protein KaiA from Synechococcus elongatus (strain ATCC 33912 / PCC 7942 / FACHB-805) (Anacystis nidulans R2).